A 335-amino-acid chain; its full sequence is Nucleoid-associated protein KPK_1538 (335 aa).

It belongs to the YejK family.

Its subcellular location is the cytoplasm. The protein localises to the nucleoid. The sequence is that of Nucleoid-associated protein KPK_1538 from Klebsiella pneumoniae (strain 342).